The primary structure comprises 359 residues: MAGNSIGQLFRVTTFGESHGIALGCIVDGVPPNMALSEADIQPDLDRRKPGTSRYTTPRREDDEVQILSGVFEGKTTGTSIGMIIKNGDQRSKDYGDIMDKFRPGHADYTYQQKYGIRDYRGGGRSSARETAMRVAAGAIAKKYLREQFGVEVRGFLSQIGDVKIAPQNISEIDWAQVNDNPFFCPDQSAVEKFDELIRQLKKDGDSIGAKLTVVAENVPVGLGEPVFDRLDADLAHALMGINAVKAVEIGDGFAVVEQRGTQHRDEMTPQGFLSNHAGGILGGISTGQPIIATIALKPTSSITVPGRTVNLNNEPVELITKGRHDPCVGIRAVPIAEAMTAIVLLDHLLRHRAQCGLK.

Residues R48 and R54 each contribute to the NADP(+) site. Residues 125 to 127 (RSS), 243 to 244 (NA), G283, 298 to 302 (KPTSS), and R324 contribute to the FMN site.

It belongs to the chorismate synthase family. In terms of assembly, homotetramer. FMNH2 serves as cofactor.

It catalyses the reaction 5-O-(1-carboxyvinyl)-3-phosphoshikimate = chorismate + phosphate. The protein operates within metabolic intermediate biosynthesis; chorismate biosynthesis; chorismate from D-erythrose 4-phosphate and phosphoenolpyruvate: step 7/7. Functionally, catalyzes the anti-1,4-elimination of the C-3 phosphate and the C-6 proR hydrogen from 5-enolpyruvylshikimate-3-phosphate (EPSP) to yield chorismate, which is the branch point compound that serves as the starting substrate for the three terminal pathways of aromatic amino acid biosynthesis. This reaction introduces a second double bond into the aromatic ring system. This Mannheimia succiniciproducens (strain KCTC 0769BP / MBEL55E) protein is Chorismate synthase.